Consider the following 699-residue polypeptide: Glycine--tRNA ligase beta subunit (699 aa).

This sequence belongs to the class-II aminoacyl-tRNA synthetase family. Tetramer of two alpha and two beta subunits.

It is found in the cytoplasm. The catalysed reaction is tRNA(Gly) + glycine + ATP = glycyl-tRNA(Gly) + AMP + diphosphate. This is Glycine--tRNA ligase beta subunit from Baumannia cicadellinicola subsp. Homalodisca coagulata.